A 528-amino-acid chain; its full sequence is PC4 and SFRS1-interacting protein (528 aa).

A PWWP domain is found at proline 7–asparagine 64. Residue lysine 75 forms a Glycyl lysine isopeptide (Lys-Gly) (interchain with G-Cter in SUMO2) linkage. Residues asparagine 86–aspartate 347 form a disordered region. Residues phenylalanine 92 to serine 106 are compositionally biased toward polar residues. 3 positions are modified to phosphoserine: serine 102, serine 105, and serine 106. Residues lysine 113 to lysine 135 show a composition bias toward basic and acidic residues. Threonine 115 and threonine 122 each carry phosphothreonine. Serine 129 carries the post-translational modification Phosphoserine. Threonine 141 bears the Phosphothreonine mark. Basic residues predominate over residues alanine 144 to alanine 153. The Nuclear localization signal motif lies at arginine 146–glutamine 156. 2 positions are modified to phosphoserine: serine 176 and serine 205. Over residues aspartate 212–arginine 260 the composition is skewed to basic and acidic residues. Serine 270 is subject to Phosphoserine. The residue at position 271 (threonine 271) is a Phosphothreonine. A phosphoserine mark is found at serine 272 and serine 274. Positions lysine 285–methionine 300 are enriched in basic residues. Positions glycine 303–aspartate 347 are enriched in basic and acidic residues. Coiled-coil stretches lie at residues glutamine 304–lysine 332 and asparagine 369–glutamate 393. An integrase-binding domain (IBD) region spans residues valine 338 to threonine 415. Serine 432 is modified (phosphoserine). Threonine 435 carries the post-translational modification Phosphothreonine. Serine 441 is modified (phosphoserine). The span at glutamate 444 to threonine 471 shows a compositional bias: basic and acidic residues. A disordered region spans residues glutamate 444–asparagine 528. Residues glycine 472–glycine 492 are compositionally biased toward polar residues. Basic and acidic residues predominate over residues glutamate 496 to asparagine 528. Position 515 is a citrulline (arginine 515). Phosphoserine is present on serine 520. Threonine 525 is modified (phosphothreonine).

This sequence belongs to the HDGF family. As to quaternary structure, monomer. Interacts with IFRD1/PC4. Interacts (via IBD domain) with POGZ (via IBM motif) and CDCA7L (via IBM motifs). Interacts (via IBD domain) with KMT2A (via IBM motifs) with a moderate affinity whereas interacts with the KMT2A-MEN1 complex with a greater affinity; MEN1 enhances interaction of KMT2A with PSIP1. Interacts (via IBD domain) with IWS1 (via IBM motif), MED1 (via IBM motif) and DBF4 (via IBM motifs). Post-translationally, citrullinated by PADI4.

Its subcellular location is the nucleus. Transcriptional coactivator involved in neuroepithelial stem cell differentiation and neurogenesis. Involved in particular in lens epithelial cell gene regulation and stress responses. May play an important role in lens epithelial to fiber cell terminal differentiation. May play a protective role during stress-induced apoptosis. In Rattus norvegicus (Rat), this protein is PC4 and SFRS1-interacting protein (Psip1).